We begin with the raw amino-acid sequence, 158 residues long: Large ribosomal subunit protein uL30 (158 aa).

It belongs to the universal ribosomal protein uL30 family. Part of the 50S ribosomal subunit.

In Sulfurisphaera tokodaii (strain DSM 16993 / JCM 10545 / NBRC 100140 / 7) (Sulfolobus tokodaii), this protein is Large ribosomal subunit protein uL30.